Here is a 131-residue protein sequence, read N- to C-terminus: uncharacterized protein (131 aa).

The protein localises to the plastid. It localises to the chloroplast. This is an uncharacterized protein from Chlorella vulgaris (Green alga).